The primary structure comprises 66 residues: Moricin-2 (66 aa).

An N-terminal signal peptide occupies residues methionine 1–proline 24.

As to expression, expressed in fat body and to a lesser extent in hemocyte and Malpighian tubules.

It localises to the secreted. Has antibacterial activity against Gram-positive and Gram-negative bacteria. Probably acts by disturbing membrane functions with its amphipathic structure. In Bombyx mori (Silk moth), this protein is Moricin-2 (MOR2).